The following is a 194-amino-acid chain: Inosine triphosphate pyrophosphatase (194 aa).

10-15 is an ITP binding site; that stretch reads TTNLKK. Glutamate 36 contributes to the Mg(2+) binding site. ITP is bound by residues lysine 48, 66–67, lysine 83, lysine 166, and 171–172; these read DT and HR.

The protein belongs to the HAM1 NTPase family. As to quaternary structure, homodimer. The cofactor is Mg(2+). Mn(2+) is required as a cofactor.

It is found in the cytoplasm. Its subcellular location is the nucleus. The catalysed reaction is ITP + H2O = IMP + diphosphate + H(+). It catalyses the reaction dITP + H2O = dIMP + diphosphate + H(+). The enzyme catalyses XTP + H2O = XMP + diphosphate + H(+). Functionally, pyrophosphatase that hydrolyzes non-canonical purine nucleotides such as inosine triphosphate (ITP), deoxyinosine triphosphate (dITP) or xanthosine 5'-triphosphate (XTP) to their respective monophosphate derivatives. The enzyme does not distinguish between the deoxy- and ribose forms. Probably excludes non-canonical purines from RNA and DNA precursor pools, thus preventing their incorporation into RNA and DNA and avoiding chromosomal lesions. This is Inosine triphosphate pyrophosphatase from Encephalitozoon intestinalis (strain ATCC 50506) (Microsporidian parasite).